Reading from the N-terminus, the 296-residue chain is Nucleotide-binding protein spr1424 (296 aa).

13–20 (GMGGAGKT) contributes to the ATP binding site. Position 63 to 66 (63 to 66 (DMRS)) interacts with GTP.

This sequence belongs to the RapZ-like family.

Its function is as follows. Displays ATPase and GTPase activities. The sequence is that of Nucleotide-binding protein spr1424 from Streptococcus pneumoniae (strain ATCC BAA-255 / R6).